A 318-amino-acid chain; its full sequence is MTVMRGLLNGGRYGNRYIWTAISLRHPEVMEGNGLESAVMQWRRMLSNAGGAEAQVKEQKEEKKDAMVSNYWGISRPKITREDGSEWPWNCFMPWETYRSDLSIDLKKHHVPRTFMDKFAYRTVKILRVPTDIFFQRRYGCRAMMLETVAAVPGMVGGMLLHLKSLRKLEQSGGWIKALLEEAENERMHLMTMVELVQPKWYERLLVLAVQGVFFNSFFVLYVLSPKLAHRIVGYLEEEAIHSYTEYLKDIDSGAIKNIPAPAIAIDYWRLPKDATLKDVITVVRADEAHHRDVNHFASDVQVQGKELRDAPAPVGYH.

A mitochondrion-targeting transit peptide spans 1–46 (MTVMRGLLNGGRYGNRYIWTAISLRHPEVMEGNGLESAVMQWRRML). The chain crosses the membrane as a helical span at residues 143–163 (AMMLETVAAVPGMVGGMLLHL). Fe cation contacts are provided by Glu-147, Glu-186, and His-189. Residues 205–225 (LLVLAVQGVFFNSFFVLYVLS) form a helical membrane-spanning segment. The Fe cation site is built by Glu-237, Glu-288, and His-291.

It belongs to the alternative oxidase family. As to quaternary structure, homodimer; disulfide-linked. Fe cation serves as cofactor.

Its subcellular location is the mitochondrion inner membrane. It catalyses the reaction 2 a ubiquinol + O2 = 2 a ubiquinone + 2 H2O. Its function is as follows. Catalyzes the cyanide-resistant oxidation of ubiquinol and the reduction of molecular oxygen to water, but does not translocate protons and consequently is not linked to oxidative phosphorylation. May increase respiration when the cytochrome respiratory pathway is restricted, or in response to low temperatures. This is Ubiquinol oxidase, mitochondrial (AOMI 1) from Mangifera indica (Mango).